The following is a 207-amino-acid chain: NAD--protein ADP-ribosyltransferase modB (207 aa).

Arg73 contributes to the NAD(+) binding site. Residue Glu173 is part of the active site.

It belongs to the Tevenvirinae NAD--protein ADP-ribosyltransferase modA family.

Its subcellular location is the virion. The catalysed reaction is L-arginyl-[protein] + NAD(+) = N(omega)-(ADP-D-ribosyl)-L-arginyl-[protein] + nicotinamide + H(+). In terms of biological role, ADP-ribosyltransferase that regulates transcription by ADP-ribosylation of host ribosomal protein S1. Additional identified targets include proteins involved in either translation or cellular metabolism such as elongation factor-Tu or trigger factor. Also reprograms the host's gene-expression system by RNAylating host ribosomal protein S1. ModB can attach NAD-capped RNAs to target proteins post-transcriptionally resulting in covalent RNA-protein conjugates. The sequence is that of NAD--protein ADP-ribosyltransferase modB from Enterobacteria phage T4 (Bacteriophage T4).